The following is a 187-amino-acid chain: Ribosome-recycling factor (187 aa).

Belongs to the RRF family.

It is found in the cytoplasm. In terms of biological role, responsible for the release of ribosomes from messenger RNA at the termination of protein biosynthesis. May increase the efficiency of translation by recycling ribosomes from one round of translation to another. This Nitrobacter winogradskyi (strain ATCC 25391 / DSM 10237 / CIP 104748 / NCIMB 11846 / Nb-255) protein is Ribosome-recycling factor.